A 464-amino-acid polypeptide reads, in one-letter code: Cysteine--tRNA ligase (464 aa).

Position 27 (cysteine 27) interacts with Zn(2+). A 'HIGH' region motif is present at residues 29-39; that stretch reads PTVYDDAHLGH. The Zn(2+) site is built by cysteine 203, histidine 234, and glutamate 238. Positions 266–270 match the 'KMSKS' region motif; it reads KMSKS. Lysine 269 is an ATP binding site.

The protein belongs to the class-I aminoacyl-tRNA synthetase family. In terms of assembly, monomer. Requires Zn(2+) as cofactor.

The protein resides in the cytoplasm. The enzyme catalyses tRNA(Cys) + L-cysteine + ATP = L-cysteinyl-tRNA(Cys) + AMP + diphosphate. The sequence is that of Cysteine--tRNA ligase from Campylobacter concisus (strain 13826).